The following is a 267-amino-acid chain: 4-hydroxy-tetrahydrodipicolinate reductase (267 aa).

NAD(+)-binding positions include G8–M13 and D34. Residue R35 coordinates NADP(+). NAD(+) is bound by residues G98–T100 and A122–F125. Catalysis depends on H155, which acts as the Proton donor/acceptor. H156 is a (S)-2,3,4,5-tetrahydrodipicolinate binding site. K159 (proton donor) is an active-site residue. G165–T166 is a binding site for (S)-2,3,4,5-tetrahydrodipicolinate.

This sequence belongs to the DapB family.

It localises to the cytoplasm. The enzyme catalyses (S)-2,3,4,5-tetrahydrodipicolinate + NAD(+) + H2O = (2S,4S)-4-hydroxy-2,3,4,5-tetrahydrodipicolinate + NADH + H(+). It catalyses the reaction (S)-2,3,4,5-tetrahydrodipicolinate + NADP(+) + H2O = (2S,4S)-4-hydroxy-2,3,4,5-tetrahydrodipicolinate + NADPH + H(+). It participates in amino-acid biosynthesis; L-lysine biosynthesis via DAP pathway; (S)-tetrahydrodipicolinate from L-aspartate: step 4/4. Functionally, catalyzes the conversion of 4-hydroxy-tetrahydrodipicolinate (HTPA) to tetrahydrodipicolinate. The polypeptide is 4-hydroxy-tetrahydrodipicolinate reductase (Pseudomonas savastanoi pv. phaseolicola (strain 1448A / Race 6) (Pseudomonas syringae pv. phaseolicola (strain 1448A / Race 6))).